A 376-amino-acid polypeptide reads, in one-letter code: DNA-directed RNA polymerase subunit alpha (376 aa).

Positions 1–259 are alpha N-terminal domain (alpha-NTD); that stretch reads MSDNSQNLLY…KHFSIFEKMD (259 aa). An alpha C-terminal domain (alpha-CTD) region spans residues 276–376; sequence KDDILHKLVL…EKIRSKNVKG (101 aa).

Belongs to the RNA polymerase alpha chain family. Homodimer. The RNAP catalytic core consists of 2 alpha, 1 beta, 1 beta' and 1 omega subunit. When a sigma factor is associated with the core the holoenzyme is formed, which can initiate transcription.

The catalysed reaction is RNA(n) + a ribonucleoside 5'-triphosphate = RNA(n+1) + diphosphate. Its function is as follows. DNA-dependent RNA polymerase catalyzes the transcription of DNA into RNA using the four ribonucleoside triphosphates as substrates. The protein is DNA-directed RNA polymerase subunit alpha of Chlamydia felis (strain Fe/C-56) (Chlamydophila felis).